Reading from the N-terminus, the 1883-residue chain is Chromodomain-helicase-DNA-binding protein 1 (1883 aa).

Positions 1–14 are enriched in polar residues; sequence MSQALNESANSIGS. The tract at residues 1 to 293 is disordered; it reads MSQALNESAN…SEDEATDSED (293 aa). Residues 39–56 are compositionally biased toward low complexity; that stretch reads SGSDSDSDSSSGNSSDGR. Over residues 114–128 the composition is skewed to polar residues; sequence QRNQSINNANTSSSL. Positions 159 to 172 are enriched in low complexity; the sequence is DSSANVSPTSSSSS. Positions 213 to 226 are enriched in acidic residues; the sequence is SDESDESEDSDDEV. Over residues 236 to 247 the composition is skewed to polar residues; that stretch reads ATTSRSKLAQQQ. The span at 284–293 shows a compositional bias: acidic residues; the sequence is SEDEATDSED. Chromo domains follow at residues 318–414 and 439–501; these read ETIE…YWRR and NNVD…TPSR. Residues 540-710 enclose the Helicase ATP-binding domain; it reads LHSWCKENSV…WALLHFIMPD (171 aa). 553-560 provides a ligand contact to ATP; that stretch reads DEMGLGKT. Residues 661 to 664 carry the DEAH box motif; sequence DEAH. Residues 840–991 enclose the Helicase C-terminal domain; the sequence is LLDKLLCRLK…HLVIQRMDTT (152 aa). Disordered regions lie at residues 1074–1185, 1246–1265, 1390–1491, 1599–1829, and 1848–1883; these read FEEE…MKEK, HKEE…AKQR, TKGG…MHFT, KAGG…PYSS, and PPPS…RTQT. Over residues 1091 to 1103 the composition is skewed to acidic residues; that stretch reads GEEDDSKDWDDII. Basic and acidic residues predominate over residues 1106–1121; it reads GFRKAIDDQERAKEME. The segment covering 1393-1402 has biased composition (basic residues); that stretch reads GQRRQRRPRA. Polar residues predominate over residues 1437-1451; that stretch reads AESSNSQVDPSTASP. Residues 1466 to 1476 show a composition bias toward basic residues; sequence KAKKSKARSKK. Residues 1505 to 1606 form a CHD1 helical C-terminal domain (CHCT) region; it reads LDPSIFNECK…KQKAGGDGEA (102 aa). A compositionally biased stretch (basic and acidic residues) spans 1600 to 1612; the sequence is AGGDGEAKGKDKG. Low complexity predominate over residues 1613 to 1622; sequence SSGSPAKSKP. The segment covering 1627 to 1638 has biased composition (basic and acidic residues); it reads TEEKEKERDRSG. Over residues 1724–1738 the composition is skewed to gly residues; it reads YYGGSGPPMGSGSYE. The segment covering 1742 to 1755 has biased composition (polar residues); sequence NSRRQGPTSPSTPR. Composition is skewed to basic and acidic residues over residues 1773–1794, 1805–1817, and 1868–1883; these read EMER…RYDG, YHRE…EKRR, and YPAD…RTQT.

The protein belongs to the SNF2/RAD54 helicase family. In terms of assembly, monomer. Component of the SAGA complex. Interacts with SSRP1.

It localises to the nucleus. The protein resides in the chromosome. It carries out the reaction ATP + H2O = ADP + phosphate + H(+). Its function is as follows. ATP-dependent chromatin-remodeling factor which functions as substrate recognition component of the transcription regulatory histone acetylation (HAT) complex SAGA. Regulates polymerase II transcription. Also required for efficient transcription by RNA polymerase I, and more specifically the polymerase I transcription termination step. Regulates negatively DNA replication. Not only involved in transcription-related chromatin remodeling, but also required to maintain a specific chromatin configuration across the genome. Involved in assembly of active chromatin. Required for maintaining open chromatin and pluripotency in embryonic stem cells and is important for wing development and fertility. Is essential for the incorporation of histone H3.3 and assembly of paternal chromatin. Required for replication-independent nucleosome assembly in the decondensing male pronucleus. This Drosophila melanogaster (Fruit fly) protein is Chromodomain-helicase-DNA-binding protein 1 (Chd1).